The following is a 490-amino-acid chain: AP-5 complex subunit mu-1 (490 aa).

In terms of domain architecture, MHD spans 206-476 (KPQVSISITE…LISSDYYIWN (271 aa)).

The protein belongs to the adaptor complexes medium subunit family. In terms of assembly, probably part of the adaptor protein complex 5 (AP-5) a tetramer composed of AP5B1, AP5M1, AP5S1 and AP5Z1.

The protein localises to the cytoplasm. The protein resides in the cytosol. It is found in the late endosome membrane. Its subcellular location is the lysosome membrane. Functionally, as part of AP-5, a probable fifth adaptor protein complex it may be involved in endosomal transport. In Bos taurus (Bovine), this protein is AP-5 complex subunit mu-1 (AP5M1).